Consider the following 278-residue polypeptide: Pantothenate synthetase (278 aa).

30–37 (MGFLHEGH) provides a ligand contact to ATP. Histidine 37 (proton donor) is an active-site residue. Glutamine 61 provides a ligand contact to (R)-pantoate. Beta-alanine is bound at residue glutamine 61. 147–150 (GQKD) provides a ligand contact to ATP. Glutamine 153 contacts (R)-pantoate. ATP-binding positions include valine 176 and 184-187 (LSSR).

Belongs to the pantothenate synthetase family. Homodimer.

The protein localises to the cytoplasm. The catalysed reaction is (R)-pantoate + beta-alanine + ATP = (R)-pantothenate + AMP + diphosphate + H(+). It functions in the pathway cofactor biosynthesis; (R)-pantothenate biosynthesis; (R)-pantothenate from (R)-pantoate and beta-alanine: step 1/1. Its function is as follows. Catalyzes the condensation of pantoate with beta-alanine in an ATP-dependent reaction via a pantoyl-adenylate intermediate. The sequence is that of Pantothenate synthetase from Thermosipho africanus (strain TCF52B).